A 268-amino-acid chain; its full sequence is Fatty acid elongase sre1 (268 aa).

A run of 7 helical transmembrane segments spans residues 31–51 (VFPFSTSVIYVLVIFALQAIM), 62–82 (FSIIHNINLIILSFSMMSGVM), 110–130 (IGFWIYIFYLSKYYELVDTVI), 137–157 (PIIFLHIFHHMAMVPVTWQWL), 161–181 (WLVGSWWCTLVNSFIHVLMYY), 198–218 (ITKAQIVQFLTGTAMVSYWFV), and 227–247 (APLSPAIVSNTINSFFIILFG).

Belongs to the ELO family.

It localises to the membrane. It carries out the reaction a very-long-chain acyl-CoA + malonyl-CoA + H(+) = a very-long-chain 3-oxoacyl-CoA + CO2 + CoA. Functionally, could be implicated in synthesis of very long chain fatty acids. The sequence is that of Fatty acid elongase sre1 (sre1) from Dictyostelium discoideum (Social amoeba).